Consider the following 214-residue polypeptide: Orotate phosphoribosyltransferase (214 aa).

Position 26 (lysine 26) interacts with 5-phospho-alpha-D-ribose 1-diphosphate. Orotate is bound at residue phenylalanine 34–phenylalanine 35. 5-phospho-alpha-D-ribose 1-diphosphate contacts are provided by residues tyrosine 72–lysine 73, arginine 99, lysine 100, lysine 103, histidine 105, and aspartate 124–alanine 132. Orotate-binding residues include threonine 128 and arginine 157.

It belongs to the purine/pyrimidine phosphoribosyltransferase family. PyrE subfamily. As to quaternary structure, homodimer. It depends on Mg(2+) as a cofactor.

It catalyses the reaction orotidine 5'-phosphate + diphosphate = orotate + 5-phospho-alpha-D-ribose 1-diphosphate. It functions in the pathway pyrimidine metabolism; UMP biosynthesis via de novo pathway; UMP from orotate: step 1/2. In terms of biological role, catalyzes the transfer of a ribosyl phosphate group from 5-phosphoribose 1-diphosphate to orotate, leading to the formation of orotidine monophosphate (OMP). The protein is Orotate phosphoribosyltransferase of Pseudomonas fluorescens (strain Pf0-1).